We begin with the raw amino-acid sequence, 264 residues long: Thymidylate synthase (264 aa).

DUMP is bound at residue Arg-21. His-51 lines the (6R)-5,10-methylene-5,6,7,8-tetrahydrofolate pocket. Position 126–127 (126–127 (RR)) interacts with dUMP. Cys-146 serves as the catalytic Nucleophile. DUMP-binding positions include 166-169 (RSCD), Asn-177, and 207-209 (HLY). Asp-169 lines the (6R)-5,10-methylene-5,6,7,8-tetrahydrofolate pocket. Ala-263 serves as a coordination point for (6R)-5,10-methylene-5,6,7,8-tetrahydrofolate.

This sequence belongs to the thymidylate synthase family. Bacterial-type ThyA subfamily. As to quaternary structure, homodimer.

The protein resides in the cytoplasm. The enzyme catalyses dUMP + (6R)-5,10-methylene-5,6,7,8-tetrahydrofolate = 7,8-dihydrofolate + dTMP. The protein operates within pyrimidine metabolism; dTTP biosynthesis. Functionally, catalyzes the reductive methylation of 2'-deoxyuridine-5'-monophosphate (dUMP) to 2'-deoxythymidine-5'-monophosphate (dTMP) while utilizing 5,10-methylenetetrahydrofolate (mTHF) as the methyl donor and reductant in the reaction, yielding dihydrofolate (DHF) as a by-product. This enzymatic reaction provides an intracellular de novo source of dTMP, an essential precursor for DNA biosynthesis. This Enterobacter sp. (strain 638) protein is Thymidylate synthase.